A 214-amino-acid chain; its full sequence is Small ribosomal subunit protein uS5 (214 aa).

The 64-residue stretch at 54–117 folds into the S5 DRBM domain; the sequence is LKYEVVDIKV…RDAKMNIIPV (64 aa).

The protein belongs to the universal ribosomal protein uS5 family. Part of the 30S ribosomal subunit. Contacts protein S4.

With S4 and S12 plays an important role in translational accuracy. The polypeptide is Small ribosomal subunit protein uS5 (Saccharolobus solfataricus (strain ATCC 35092 / DSM 1617 / JCM 11322 / P2) (Sulfolobus solfataricus)).